Reading from the N-terminus, the 463-residue chain is Perilipin-5 (463 aa).

The segment at 1–32 is disordered; that stretch reads MDQRGEDTTLAPHSRMSGDQTAQDPGSSLGEL. The interaction with LIPE stretch occupies residues 1–123; sequence MDQRGEDTTL…KLEEKLPFLQ (123 aa). The essential for lipid droplet targeting stretch occupies residues 1–188; it reads MDQRGEDTTL…RFLPMTEAEL (188 aa). Ser17, Ser163, and Ser337 each carry phosphoserine. The segment covering 17-26 has biased composition (polar residues); sequence SGDQTAQDPG. The interval 200-463 is interaction with PNPLA2 and ABHD5; that stretch reads VGTVEEQRQQ…KHTMMPELDF (264 aa). A disordered region spans residues 433-463; the sequence is AWEAESADPGGQEAEPPRGQGKHTMMPELDF. Residues 444–463 are necessary for mitochondria recruitment at the lipid droplet surface; it reads QEAEPPRGQGKHTMMPELDF.

This sequence belongs to the perilipin family. As to quaternary structure, homooligomer. Interacts with PNPLA2; prevents interaction of PNPLA2 with ABHD5. Interacts with ABHD5; targets ABHD5 to lipid droplets and promotes interaction of ABHD5 with PNPLA2. Interacts with LIPE. In terms of processing, phosphorylated by PKA. Phosphorylated on serine in skeletal muscle at rest or with lipolytic stimulation. In terms of tissue distribution, highly expressed in oxidative tissues, including heart, liver, brown adipose tissue (BAT) and slow-twitch fibers of skeletal muscle. Lower expression in epididymal white adipose tissue and anterior tibialis and quadriceps. Expressed in adrenal glands. Isoform 2 has the highest expression in heart.

It is found in the lipid droplet. The protein localises to the cytoplasm. The protein resides in the mitochondrion. Lipid droplet-associated protein that maintains the balance between lipogenesis and lipolysis and also regulates fatty acid oxidation in oxidative tissues. Recruits mitochondria to the surface of lipid droplets and is involved in lipid droplet homeostasis by regulating both the storage of fatty acids in the form of triglycerides and the release of fatty acids for mitochondrial fatty acid oxidation. In lipid droplet triacylglycerol hydrolysis, plays a role as a scaffolding protein for three major key lipolytic players: ABHD5, PNPLA2 and LIPE. Reduces the triacylglycerol hydrolase activity of PNPLA2 by recruiting and sequestering PNPLA2 to lipid droplets. Phosphorylation by PKA enables lipolysis probably by promoting release of ABHD5 from the perilipin scaffold and by facilitating interaction of ABHD5 with PNPLA2. Also increases lipolysis through interaction with LIPE and upon PKA-mediated phosphorylation of LIPE. This Mus musculus (Mouse) protein is Perilipin-5 (Plin5).